The chain runs to 391 residues: GTPase Obg (391 aa).

The 159-residue stretch at 1-159 (MKFVDEASIL…RDLLLELMLL (159 aa)) folds into the Obg domain. The disordered stretch occupies residues 127-147 (NTRFKSSVNRTPRQKTNGTPG). Residues 129-145 (RFKSSVNRTPRQKTNGT) show a composition bias toward polar residues. Residues 160-333 (ADVGMLGMPN…LCWDVMTFII (174 aa)) enclose the OBG-type G domain. GTP contacts are provided by residues 166-173 (GMPNAGKS), 191-195 (FTTLV), 213-216 (DIPG), 283-286 (NKID), and 314-316 (SAA). Mg(2+) contacts are provided by Ser-173 and Thr-193.

This sequence belongs to the TRAFAC class OBG-HflX-like GTPase superfamily. OBG GTPase family. As to quaternary structure, monomer. It depends on Mg(2+) as a cofactor.

The protein localises to the cytoplasm. Functionally, an essential GTPase which binds GTP, GDP and possibly (p)ppGpp with moderate affinity, with high nucleotide exchange rates and a fairly low GTP hydrolysis rate. Plays a role in control of the cell cycle, stress response, ribosome biogenesis and in those bacteria that undergo differentiation, in morphogenesis control. The polypeptide is GTPase Obg (Salmonella arizonae (strain ATCC BAA-731 / CDC346-86 / RSK2980)).